The following is a 753-amino-acid chain: Eukaryotic translation initiation factor 3 subunit B (753 aa).

The 88-residue stretch at 42-129 folds into the RRM domain; that stretch reads TMLVVDNIPI…NVLHVNRFGD (88 aa). 5 WD repeats span residues 142-185, 203-241, 321-362, 537-580, and 595-640; these read DLPS…WWNG, NSKW…GPIG, DTQS…LLDR, LDSK…DERR, and GEHY…LLHE. The stretch at 723–753 forms a coiled coil; sequence KSKAKIDVKGQEARVEEWVEELIDETEELSM.

Belongs to the eIF-3 subunit B family. As to quaternary structure, component of the eukaryotic translation initiation factor 3 (eIF-3) complex.

It localises to the cytoplasm. In terms of biological role, RNA-binding component of the eukaryotic translation initiation factor 3 (eIF-3) complex, which is involved in protein synthesis of a specialized repertoire of mRNAs and, together with other initiation factors, stimulates binding of mRNA and methionyl-tRNAi to the 40S ribosome. The eIF-3 complex specifically targets and initiates translation of a subset of mRNAs involved in cell proliferation. The chain is Eukaryotic translation initiation factor 3 subunit B from Cryptococcus neoformans var. neoformans serotype D (strain B-3501A) (Filobasidiella neoformans).